The following is a 579-amino-acid chain: CTP synthase (579 aa).

Positions 310–558 (YVELHDAYLS…VAAAIGCLDQ (249 aa)) constitute a Glutamine amidotransferase type-1 domain. Residues Cys402, His531, and Glu533 each act as for GATase activity in the active site.

It belongs to the CTP synthase family.

The catalysed reaction is UTP + L-glutamine + ATP + H2O = CTP + L-glutamate + ADP + phosphate + 2 H(+). It participates in pyrimidine metabolism; CTP biosynthesis via de novo pathway; CTP from UDP: step 2/2. Its function is as follows. Catalyzes the ATP-dependent amination of UTP to CTP with either L-glutamine or ammonia as the source of nitrogen. The polypeptide is CTP synthase (pyr-7) (Neurospora crassa (strain ATCC 24698 / 74-OR23-1A / CBS 708.71 / DSM 1257 / FGSC 987)).